Here is a 308-residue protein sequence, read N- to C-terminus: Beta-1,3-galactosyltransferase 5 (308 aa).

The Cytoplasmic segment spans residues 1–7 (MAHMKTR). Residues 8–25 (LVYASILMMGALCLYFSM) form a helical; Signal-anchor for type II membrane protein membrane-spanning segment. Residues 26 to 308 (DSFRELPFVF…NSKEQDCPAV (283 aa)) are Lumenal-facing. N128, N172, and N229 each carry an N-linked (GlcNAc...) asparagine glycan.

It belongs to the glycosyltransferase 31 family. As to expression, expressed in brain and kidney.

The protein resides in the golgi apparatus membrane. The enzyme catalyses a globoside Gb4Cer (d18:1(4E)) + UDP-alpha-D-galactose = a globoside GalGb4Cer (d18:1(4E)) + UDP + H(+). Its pathway is protein modification; protein glycosylation. Functionally, catalyzes the transfer of Gal to GlcNAc-based acceptors with a preference for the core3 O-linked glycan GlcNAc(beta1,3)GalNAc structure. Can use glycolipid LC3Cer as an efficient acceptor. Also catalyzes the transfer of Gal to the terminal GalNAc unit of the globoside GB4, thereby synthesizing the glycolipid GB5, also known as the stage-specific embryonic antigen-3 (SSEA-3). The sequence is that of Beta-1,3-galactosyltransferase 5 from Mus musculus (Mouse).